We begin with the raw amino-acid sequence, 108 residues long: Vacuolar ATPase assembly integral membrane protein VMA21 (108 aa).

Topologically, residues 1–34 are cytoplasmic; it reads MASRRSAAAKKEDFSFEAAATQSAHEAQEGFPSS. Residues 35-55 form a helical membrane-spanning segment; the sequence is VIIKLVLVTVAMICAPLGTYF. The Lumenal portion of the chain corresponds to 56-68; the sequence is GTLNTICGGDSSY. Residues 69–89 form a helical membrane-spanning segment; it reads AGALAAISVNVVLIIYLIIAA. At 90–108 the chain is on the cytoplasmic side; sequence REDTGESEEERKGKEGKEE.

Belongs to the VMA21 family.

It localises to the endoplasmic reticulum membrane. It is found in the endoplasmic reticulum-Golgi intermediate compartment membrane. The protein resides in the cytoplasmic vesicle. Its subcellular location is the COPII-coated vesicle membrane. Its function is as follows. Required for the assembly of the V0 complex of the vacuolar ATPase (V-ATPase) in the endoplasmic reticulum. The polypeptide is Vacuolar ATPase assembly integral membrane protein VMA21 (Ajellomyces capsulatus (strain NAm1 / WU24) (Darling's disease fungus)).